We begin with the raw amino-acid sequence, 489 residues long: Ubiquitin carboxyl-terminal hydrolase 14 (489 aa).

Residues 102-458 (CGLANLGNTC…SAYVLLYEAR (357 aa)) enclose the USP domain. The active-site Nucleophile is C111. The Proton acceptor role is filled by H409. The disordered stretch occupies residues 467–489 (PPAPVPTEVAADTAEPMEVSEKQ).

Belongs to the peptidase C19 family. USP14/UBP6 subfamily.

It carries out the reaction Thiol-dependent hydrolysis of ester, thioester, amide, peptide and isopeptide bonds formed by the C-terminal Gly of ubiquitin (a 76-residue protein attached to proteins as an intracellular targeting signal).. Functionally, proteasome-associated deubiquitinase which releases ubiquitin from the proteasome targeted ubiquitinated proteins. Ensures the regeneration of ubiquitin at the proteasome. The sequence is that of Ubiquitin carboxyl-terminal hydrolase 14 (usp-14) from Caenorhabditis elegans.